We begin with the raw amino-acid sequence, 817 residues long: DNA-directed RNA polymerase subunit beta'' (817 aa).

Zn(2+) is bound by residues cysteine 219, cysteine 291, cysteine 298, and cysteine 301.

Belongs to the RNA polymerase beta' chain family. RpoC2 subfamily. In plastids the minimal PEP RNA polymerase catalytic core is composed of four subunits: alpha, beta, beta', and beta''. When a (nuclear-encoded) sigma factor is associated with the core the holoenzyme is formed, which can initiate transcription. Requires Zn(2+) as cofactor.

The protein localises to the plastid. The enzyme catalyses RNA(n) + a ribonucleoside 5'-triphosphate = RNA(n+1) + diphosphate. Its function is as follows. DNA-dependent RNA polymerase catalyzes the transcription of DNA into RNA using the four ribonucleoside triphosphates as substrates. This Euglena longa (Euglenophycean alga) protein is DNA-directed RNA polymerase subunit beta'' (rpoC2).